Reading from the N-terminus, the 571-residue chain is Leiomodin-3 (571 aa).

3 disordered regions span residues 1-29 (MSGHSRNSEQEDTLSEELDEDELLANLSP), 46-67 (PHLPVGMIQKDQTDKAPTGNFN), and 91-228 (PVSF…AKLD). Over residues 10 to 23 (QEDTLSEELDEDEL) the composition is skewed to acidic residues. Polar residues predominate over residues 94–105 (FVQSEKNTQNQR). A compositionally biased stretch (basic and acidic residues) spans 119–134 (LKEKLNSEILAKKRES). The span at 142-179 (EAEDDDEDEEEEEEDDEDEEEEEEDEEDDEGEEDEDGE) shows a compositional bias: acidic residues. The segment covering 180 to 192 (QANREKNDAKEQI) has biased composition (basic and acidic residues). Residues 193 to 204 (HNNPGTYQQLAT) show a composition bias toward polar residues. Basic and acidic residues predominate over residues 206–228 (TAHEQKDTSETKEKGEKKIAKLD). Positions 397-436 (VTNLLTRNQDKRRQKRQEEQQQQQLKEQRKLIAMLENGLG) form a coiled coil. The WH2 domain occupies 545 to 564 (PRDQLLNDIRHSNVAYLKPV).

It belongs to the tropomodulin family. In terms of assembly, may interact with tropomyosin alpha (TPM1/2) N-terminus. Interacts with KLHL40; leading to stabilization. In terms of processing, ubiquitinated, leading to its degradation. Interaction with KLHL40 negatively regulates ubiquitination and degradation. Skeletal muscle and heart-specific (at protein level).

It is found in the cytoplasm. It localises to the myofibril. The protein localises to the sarcomere. The protein resides in the a band. Its subcellular location is the m line. It is found in the cytoskeleton. In terms of biological role, essential for the organization of sarcomeric actin thin filaments in skeletal muscle. Increases the rate of actin polymerization. This chain is Leiomodin-3, found in Mus musculus (Mouse).